The following is a 157-amino-acid chain: Glucosamine 6-phosphate N-acetyltransferase 1 (157 aa).

One can recognise an N-acetyltransferase domain in the interval 9-157 (ISFRPLDIDD…SIYLPTPPKL (149 aa)). Substrate contacts are provided by residues T31, 78 to 81 (KFIR), and 90 to 92 (EDI). Acetyl-CoA is bound at residue 100–105 (GKNLGL). 121 to 122 (YK) contacts substrate. Acetyl-CoA is bound at residue 135–137 (YEK).

Belongs to the acetyltransferase family. GNA1 subfamily.

It catalyses the reaction D-glucosamine 6-phosphate + acetyl-CoA = N-acetyl-D-glucosamine 6-phosphate + CoA + H(+). Its pathway is nucleotide-sugar biosynthesis; UDP-N-acetyl-alpha-D-glucosamine biosynthesis; N-acetyl-alpha-D-glucosamine 1-phosphate from alpha-D-glucosamine 6-phosphate (route I): step 1/2. The protein is Glucosamine 6-phosphate N-acetyltransferase 1 (gna1) of Dictyostelium discoideum (Social amoeba).